The primary structure comprises 228 residues: uncharacterized protein (228 aa).

Disordered regions lie at residues 1-62 and 160-228; these read MQRP…VGRF and SPRP…LSGV. The span at 13–33 shows a compositional bias: low complexity; that stretch reads AASTRAPPRPSAPQQGRRQPS. Residues 167–176 show a composition bias toward polar residues; it reads RGQQVTQDGP.

This is an uncharacterized protein from Homo sapiens (Human).